The following is a 66-amino-acid chain: Stress-associated endoplasmic reticulum protein 1 (66 aa).

A disordered region spans residues 1 to 33; it reads MVAKQRIRMANEKHSKNITQRGNVAKTSRNAPG. At 1–38 the chain is on the cytoplasmic side; sequence MVAKQRIRMANEKHSKNITQRGNVAKTSRNAPGEKASV. The span at 17–30 shows a compositional bias: polar residues; the sequence is NITQRGNVAKTSRN. A helical transmembrane segment spans residues 39–59; that stretch reads GPWLLALFIFVVCGSAIFQII. Topologically, residues 60–66 are extracellular; it reads QSIRMGM.

This sequence belongs to the RAMP4 family. Interacts with SEC61B, SEC61A1 and the SEC61 complex. Interacts with CANX.

Its subcellular location is the membrane. It localises to the endoplasmic reticulum membrane. Functionally, interacts with target proteins during their translocation into the lumen of the endoplasmic reticulum. Protects unfolded target proteins against degradation during ER stress. May facilitate glycosylation of target proteins after termination of ER stress. May modulate the use of N-glycosylation sites on target proteins. The chain is Stress-associated endoplasmic reticulum protein 1 (SERP1) from Pongo abelii (Sumatran orangutan).